A 553-amino-acid polypeptide reads, in one-letter code: Probable malate:quinone oxidoreductase (553 aa).

Positions 534–543 (QLKPQVQPQP) are enriched in low complexity. Residues 534-553 (QLKPQVQPQPAHKAVADIAL) are disordered.

Belongs to the MQO family. The cofactor is FAD.

The catalysed reaction is (S)-malate + a quinone = a quinol + oxaloacetate. Its pathway is carbohydrate metabolism; tricarboxylic acid cycle; oxaloacetate from (S)-malate (quinone route): step 1/1. This chain is Probable malate:quinone oxidoreductase, found in Citrobacter koseri (strain ATCC BAA-895 / CDC 4225-83 / SGSC4696).